The chain runs to 276 residues: Expansin-like A3 (276 aa).

A signal peptide spans 1–28 (MAVLLSILSSSFLLLLAASSSSTPRASA). Residues 52–158 (GGGCGYGAMA…RRIPCDYKDK (107 aa)) enclose the Expansin-like EG45 domain. N-linked (GlcNAc...) asparagine glycosylation is found at Asn115 and Asn159. Residues 172-255 (NNLVIKFLYQ…NWQPGQVYDT (84 aa)) form the Expansin-like CBD domain.

The protein belongs to the expansin family. Expansin-like A subfamily.

The protein localises to the secreted. The protein is Expansin-like A3 (EXLA3) of Oryza sativa subsp. japonica (Rice).